The following is a 122-amino-acid chain: Basic phospholipase A2 10 (122 aa).

Cystine bridges form between Cys26–Cys114, Cys28–Cys43, Cys42–Cys94, Cys48–Cys122, Cys49–Cys87, Cys56–Cys80, and Cys74–Cys85. The Ca(2+) site is built by Tyr27, Gly29, and Gly31. The active site involves His46. Ca(2+) is bound at residue Asp47. Asp88 is a catalytic residue.

Ca(2+) serves as cofactor. Expressed by the venom gland.

It is found in the secreted. It carries out the reaction a 1,2-diacyl-sn-glycero-3-phosphocholine + H2O = a 1-acyl-sn-glycero-3-phosphocholine + a fatty acid + H(+). Inhibited by chemical modifications mediated by p-BPB, anhydrous acetic acid and NBSF. Its function is as follows. Snake venom phospholipase A2 (PLA2) that has a strong dose-dependent anticoagulant effect. In vivo, intramuscular and intervenal injection causes muscle necrosis. Induces moderate edema in the mouse foot pad. PLA2 catalyzes the calcium-dependent hydrolysis of the 2-acyl groups in 3-sn-phosphoglycerides. The polypeptide is Basic phospholipase A2 10 (Crotalus durissus cumanensis (South American rattlesnake)).